We begin with the raw amino-acid sequence, 352 residues long: Photosystem II D2 protein (352 aa).

A helical membrane pass occupies residues 40–60 (CAYLALGGWLTGTSFVTSWYT). A chlorophyll a-binding site is contributed by His117. A helical membrane pass occupies residues 124–140 (GFMLRQFEIARLVGVRP). Pheophytin a-binding residues include Gln129 and Asn142. The chain crosses the membrane as a helical span at residues 152-165 (VFVSVFLMYPLGQS). Residue His197 coordinates chlorophyll a. Residues 207–227 (GALLCAIHGATVENTLFEDSE) traverse the membrane as a helical segment. A plastoquinone-binding residues include His214 and Phe261. His214 is a Fe cation binding site. Fe cation is bound at residue His268. A helical membrane pass occupies residues 278-294 (GLWMSSIGIVGLALNLR).

This sequence belongs to the reaction center PufL/M/PsbA/D family. PSII is composed of 1 copy each of membrane proteins PsbA, PsbB, PsbC, PsbD, PsbE, PsbF, PsbH, PsbI, PsbJ, PsbK, PsbL, PsbM, PsbT, PsbX, PsbY, PsbZ, Psb30/Ycf12, peripheral proteins PsbO, CyanoQ (PsbQ), PsbU, PsbV and a large number of cofactors. It forms dimeric complexes. Requires The D1/D2 heterodimer binds P680, chlorophylls that are the primary electron donor of PSII, and subsequent electron acceptors. It shares a non-heme iron and each subunit binds pheophytin, quinone, additional chlorophylls, carotenoids and lipids. There is also a Cl(-1) ion associated with D1 and D2, which is required for oxygen evolution. The PSII complex binds additional chlorophylls, carotenoids and specific lipids. as cofactor.

Its subcellular location is the cellular thylakoid membrane. It carries out the reaction 2 a plastoquinone + 4 hnu + 2 H2O = 2 a plastoquinol + O2. In terms of biological role, photosystem II (PSII) is a light-driven water:plastoquinone oxidoreductase that uses light energy to abstract electrons from H(2)O, generating O(2) and a proton gradient subsequently used for ATP formation. It consists of a core antenna complex that captures photons, and an electron transfer chain that converts photonic excitation into a charge separation. The D1/D2 (PsbA/PsbD) reaction center heterodimer binds P680, the primary electron donor of PSII as well as several subsequent electron acceptors. D2 is needed for assembly of a stable PSII complex. The polypeptide is Photosystem II D2 protein (Synechococcus elongatus (strain ATCC 33912 / PCC 7942 / FACHB-805) (Anacystis nidulans R2)).